Reading from the N-terminus, the 170-residue chain is J domain-containing protein (170 aa).

One can recognise a J domain in the interval 17–82; sequence DYYALLGCDE…SKRALYDKWR (66 aa). The tract at residues 101-170 is disordered; sequence QQSMHWSKPN…VLSKFRNYEI (70 aa). The span at 110–120 shows a compositional bias: basic and acidic residues; it reads NTKDRMLEGDG. A compositionally biased stretch (low complexity) spans 121 to 134; sequence SKPSGPSSLGPSNP.

The polypeptide is J domain-containing protein (jdp) (Bombyx mori (Silk moth)).